The chain runs to 1015 residues: DNA polymerase catalytic subunit (1015 aa).

The protein belongs to the DNA polymerase type-B family. In terms of assembly, forms a complex with the major DNA-binding protein BALF2, the DNA polymerase processivity factor BMRF1, and the alkaline exonuclease BGLF5. Interacts with the putative helicase-primase complex composed of BBLF4, BSLF1 and BBLF2/3 proteins; these interactions may coordinate leading and lagging strand DNA synthesis at the replication fork.

It is found in the host nucleus. It carries out the reaction DNA(n) + a 2'-deoxyribonucleoside 5'-triphosphate = DNA(n+1) + diphosphate. Functionally, replicates viral genomic DNA in the late phase of lytic infection, producing long concatemeric DNA. The replication complex is composed of six viral proteins: the DNA polymerase, processivity factor, primase, primase-associated factor, helicase, and ssDNA-binding protein. The sequence is that of DNA polymerase catalytic subunit from Homo sapiens (Human).